The following is an 880-amino-acid chain: DNA double-strand break repair Rad50 ATPase (880 aa).

ATP contacts are provided by residues Arg12, Asn32–Ser38, and Gln138. Coiled coils occupy residues Gly225 to Glu336 and Gly391 to Asn744. One can recognise a Zinc-hook domain in the interval Leu397 to Arg494. Zn(2+) is bound by residues Cys442 and Cys445. Phe789 to Glu794 provides a ligand contact to ATP.

This sequence belongs to the SMC family. RAD50 subfamily. In terms of assembly, homodimer. Forms a heterotetramer composed of two Mre11 subunits and two Rad50 subunits. Zn(2+) is required as a cofactor.

Part of the Rad50/Mre11 complex, which is involved in the early steps of DNA double-strand break (DSB) repair. The complex may facilitate opening of the processed DNA ends to aid in the recruitment of HerA and NurA. Rad50 controls the balance between DNA end bridging and DNA resection via ATP-dependent structural rearrangements of the Rad50/Mre11 complex. In Pyrococcus abyssi (strain GE5 / Orsay), this protein is DNA double-strand break repair Rad50 ATPase.